A 461-amino-acid chain; its full sequence is Cysteine--tRNA ligase (461 aa).

Cysteine 28 is a binding site for Zn(2+). Positions 30–40 match the 'HIGH' region motif; it reads ITVYDLCHIGH. Residues cysteine 209, histidine 234, and glutamate 238 each coordinate Zn(2+). A 'KMSKS' region motif is present at residues 266 to 270; the sequence is KMSKS. Lysine 269 contacts ATP.

The protein belongs to the class-I aminoacyl-tRNA synthetase family. As to quaternary structure, monomer. Zn(2+) is required as a cofactor.

Its subcellular location is the cytoplasm. The enzyme catalyses tRNA(Cys) + L-cysteine + ATP = L-cysteinyl-tRNA(Cys) + AMP + diphosphate. The polypeptide is Cysteine--tRNA ligase (Enterobacter sp. (strain 638)).